A 205-amino-acid chain; its full sequence is Probable thymidylate kinase (205 aa).

Residue 7–14 (GIDGSGKS) participates in ATP binding.

It belongs to the thymidylate kinase family.

It catalyses the reaction dTMP + ATP = dTDP + ADP. The chain is Probable thymidylate kinase from Methanoculleus marisnigri (strain ATCC 35101 / DSM 1498 / JR1).